The sequence spans 352 residues: Protein MGF 360-9L (352 aa).

Belongs to the asfivirus MGF 360 family. In terms of assembly, interacts with host STAT1; this interaction mediates STAT1 degradation through apoptosis. Interacts with host STAT2; this interaction mediates STAT2 degradation through the proteasome.

The protein resides in the host cytoplasm. In terms of biological role, plays a role in virus cell tropism, and may be required for efficient virus replication in macrophages. In addition, inhibits IFN-beta-induced IFN-stimulated genes (ISGs) transcription. Mechanistically, degrades host STAT1 and STAT2 through apoptosis and ubiquitin-proteasome pathways respectively. This is Protein MGF 360-9L from Ornithodoros (relapsing fever ticks).